Reading from the N-terminus, the 66-residue chain is MKAGIHPNFKKATVKCACGNEFETGSVKEEVRVEICSECHPFYTGRQKFASADGRVDRFNKKYGLK.

Zn(2+) is bound by residues Cys16, Cys18, Cys36, and Cys39.

The protein belongs to the bacterial ribosomal protein bL31 family. Type A subfamily. Part of the 50S ribosomal subunit during exponential growth. Zn(2+) is required as a cofactor.

Its function is as follows. Binds the 23S rRNA. Functionally, while neither of the L31 paralogs is essential, this protein seems to function as the main L31 protein. Has a lower affinity for 70S ribosomes than the non-zinc-containing paralog L31B (ytiA); is displaced by it to varying extents, even under zinc-replete conditions. This chain is Large ribosomal subunit protein bL31 (rpmE), found in Bacillus subtilis (strain 168).